The following is a 314-amino-acid chain: DNA-directed RNA polymerase subunit alpha (314 aa).

Positions 1 to 228 (MIEIEKPKIE…EHLNIFVGLT (228 aa)) are alpha N-terminal domain (alpha-NTD). The interval 246-314 (EKVLEMTIEE…ELGLGLRKDD (69 aa)) is alpha C-terminal domain (alpha-CTD).

It belongs to the RNA polymerase alpha chain family. As to quaternary structure, homodimer. The RNAP catalytic core consists of 2 alpha, 1 beta, 1 beta' and 1 omega subunit. When a sigma factor is associated with the core the holoenzyme is formed, which can initiate transcription.

The catalysed reaction is RNA(n) + a ribonucleoside 5'-triphosphate = RNA(n+1) + diphosphate. DNA-dependent RNA polymerase catalyzes the transcription of DNA into RNA using the four ribonucleoside triphosphates as substrates. The sequence is that of DNA-directed RNA polymerase subunit alpha from Bacillus cytotoxicus (strain DSM 22905 / CIP 110041 / 391-98 / NVH 391-98).